A 207-amino-acid polypeptide reads, in one-letter code: Large ribosomal subunit protein uL4 (207 aa).

Positions 44 to 58 (RAPTRATRERSDVAR) are enriched in basic and acidic residues. Residues 44-82 (RAPTRATRERSDVARSGKKFGRQKGGGTARHGDRRSPIF) form a disordered region.

This sequence belongs to the universal ribosomal protein uL4 family. In terms of assembly, part of the 50S ribosomal subunit.

Functionally, one of the primary rRNA binding proteins, this protein initially binds near the 5'-end of the 23S rRNA. It is important during the early stages of 50S assembly. It makes multiple contacts with different domains of the 23S rRNA in the assembled 50S subunit and ribosome. Forms part of the polypeptide exit tunnel. The sequence is that of Large ribosomal subunit protein uL4 from Zymomonas mobilis subsp. mobilis (strain ATCC 31821 / ZM4 / CP4).